Consider the following 333-residue polypeptide: Autoinducer 2 import system permease protein LsrD (333 aa).

10 helical membrane passes run 7–27 (YGWE…FGLS), 45–65 (ICIG…GIDI), 67–87 (FGST…AGVP), 90–110 (VAIP…AGLI), 118–138 (LVIT…LSGL), 162–182 (LFGL…FWLL), 212–232 (TLCM…ILLV), 240–260 (SDLG…GGAN), 261–281 (IYGG…VGYL), and 288–308 (IGTP…LVVV).

The protein belongs to the binding-protein-dependent transport system permease family. AraH/RbsC subfamily. In terms of assembly, the complex is composed of two ATP-binding proteins (LsrA), two transmembrane proteins (LsrC and LsrD) and a solute-binding protein (LsrB).

The protein resides in the cell inner membrane. Its function is as follows. Part of the ABC transporter complex LsrABCD involved in autoinducer 2 (AI-2) import. Probably responsible for the translocation of the substrate across the membrane. The polypeptide is Autoinducer 2 import system permease protein LsrD (lsrD) (Yersinia pseudotuberculosis serotype O:1b (strain IP 31758)).